A 292-amino-acid polypeptide reads, in one-letter code: Acetyl-coenzyme A carboxylase carboxyl transferase subunit beta (292 aa).

A CoA carboxyltransferase N-terminal domain is found at 23–292 (VWSKCTACGN…TEATEVSVNE (270 aa)). Zn(2+)-binding residues include C27, C30, C46, and C49. The segment at 27–49 (CTACGNIIYKADLERSLNVCPKC) adopts a C4-type zinc-finger fold.

The protein belongs to the AccD/PCCB family. In terms of assembly, acetyl-CoA carboxylase is a heterohexamer composed of biotin carboxyl carrier protein (AccB), biotin carboxylase (AccC) and two subunits each of ACCase subunit alpha (AccA) and ACCase subunit beta (AccD). Zn(2+) serves as cofactor.

It is found in the cytoplasm. It carries out the reaction N(6)-carboxybiotinyl-L-lysyl-[protein] + acetyl-CoA = N(6)-biotinyl-L-lysyl-[protein] + malonyl-CoA. It participates in lipid metabolism; malonyl-CoA biosynthesis; malonyl-CoA from acetyl-CoA: step 1/1. Functionally, component of the acetyl coenzyme A carboxylase (ACC) complex. Biotin carboxylase (BC) catalyzes the carboxylation of biotin on its carrier protein (BCCP) and then the CO(2) group is transferred by the transcarboxylase to acetyl-CoA to form malonyl-CoA. The chain is Acetyl-coenzyme A carboxylase carboxyl transferase subunit beta from Idiomarina loihiensis (strain ATCC BAA-735 / DSM 15497 / L2-TR).